We begin with the raw amino-acid sequence, 628 residues long: Leucine-rich repeat and fibronectin type-III domain-containing protein 3 (628 aa).

The N-terminal stretch at 1 to 16 (MAILPLLLCLLPLAPA) is a signal peptide. The Extracellular segment spans residues 17 to 539 (SSPPQSATPS…PHAPFLGGTM (523 aa)). The LRRNT domain occupies 19–59 (PPQSATPSPCPRRCRCQTQSLPLSVLCPGAGLLFVPPSLDR). LRR repeat units follow at residues 60-83 (RAAE…ANMT), 84-105 (GLLH…AFAD), 108-129 (ALRA…QLRG), 132-153 (NLRH…ALDD), 157-178 (TLED…ALGR), 181-202 (NVNT…AFSR), and 205-226 (KLAR…PLFS). Asn-81 carries an N-linked (GlcNAc...) asparagine glycan. The region spanning 249 to 295 (NPLHCNCELVWLRRLAREDDLEACASPPALGGRYFWAVGEEEFVCEP) is the LRRCT domain. Residues 295-382 (PPVVTHRSPP…GEATAAVELT (88 aa)) enclose the Ig-like domain. Cysteines 317 and 366 form a disulfide. N-linked (GlcNAc...) asparagine glycans are attached at residues Asn-339, Asn-348, and Asn-393. The interval 382–430 (TVGPPPPPQLANSTSCDPPRDGDPDALTPPSAASASAKVADTGPPTDRG) is disordered. Over residues 406 to 422 (DALTPPSAASASAKVAD) the composition is skewed to low complexity. The Fibronectin type-III domain maps to 425 to 523 (PPTDRGVQVT…GCARFSTEPA (99 aa)). Residue Asn-462 is glycosylated (N-linked (GlcNAc...) asparagine). A helical transmembrane segment spans residues 540–560 (IIALGGVIVASVLVFIFVLLM). Topologically, residues 561 to 628 (RYKVHGGQPP…WGPGHEPVGP (68 aa)) are cytoplasmic.

Belongs to the LRFN family. Can form heteromeric complexes with LRFN1, LRFN2, LRFN4 and LRFN5. Able to form homomeric complexes across cell junctions, between adjacent cells. Does not interact with DLG4. N-glycosylated.

The protein resides in the cell membrane. Its subcellular location is the cell projection. It is found in the axon. It localises to the dendrite. The protein localises to the synapse. The protein resides in the presynaptic cell membrane. Its subcellular location is the postsynaptic cell membrane. Cell adhesion molecule that mediates homophilic cell-cell adhesion in a Ca(2+)-independent manner. Promotes neurite outgrowth in hippocampal neurons. The polypeptide is Leucine-rich repeat and fibronectin type-III domain-containing protein 3 (LRFN3) (Homo sapiens (Human)).